Here is a 1331-residue protein sequence, read N- to C-terminus: Retrotransposon-like protein 1 (1331 aa).

4 disordered regions span residues 1 to 123, 128 to 147, 556 to 595, and 971 to 1033; these read MMEP…SQED, TDLA…SSTV, EADE…ETFY, and PSSE…DEPN. A compositionally biased stretch (low complexity) spans 19–30; it reads SSKQMESSEGSS. Acidic residues-rich tracts occupy residues 109–123, 128–143, and 569–578; these read EMEE…SQED, TDLA…EEPD, and GSDDLSESEP. The segment covering 992-1001 has biased composition (low complexity); that stretch reads RRVATTTRPT. Residues 1015–1024 are compositionally biased toward acidic residues; it reads PESEDEEESE. A run of 2 helical transmembrane segments spans residues 1070–1090 and 1117–1137; these read FYRS…LVML and LFLD…TQLF. The interval 1309-1331 is disordered; that stretch reads SPPREGATLEELPSDADEDAGLD. A compositionally biased stretch (acidic residues) spans 1320–1331; sequence LPSDADEDAGLD.

Its subcellular location is the membrane. Plays an essential role in capillaries endothelial cells for the maintenance of feto-maternal interface and for development of the placenta. The polypeptide is Retrotransposon-like protein 1 (RTL1) (Bos taurus (Bovine)).